Consider the following 159-residue polypeptide: SsrA-binding protein (159 aa).

The segment at K133–G159 is disordered. Positions D137 to G159 are enriched in basic and acidic residues.

This sequence belongs to the SmpB family.

The protein resides in the cytoplasm. Required for rescue of stalled ribosomes mediated by trans-translation. Binds to transfer-messenger RNA (tmRNA), required for stable association of tmRNA with ribosomes. tmRNA and SmpB together mimic tRNA shape, replacing the anticodon stem-loop with SmpB. tmRNA is encoded by the ssrA gene; the 2 termini fold to resemble tRNA(Ala) and it encodes a 'tag peptide', a short internal open reading frame. During trans-translation Ala-aminoacylated tmRNA acts like a tRNA, entering the A-site of stalled ribosomes, displacing the stalled mRNA. The ribosome then switches to translate the ORF on the tmRNA; the nascent peptide is terminated with the 'tag peptide' encoded by the tmRNA and targeted for degradation. The ribosome is freed to recommence translation, which seems to be the essential function of trans-translation. The polypeptide is SsrA-binding protein (Sinorhizobium medicae (strain WSM419) (Ensifer medicae)).